The following is a 470-amino-acid chain: MDGDISTGKMASPACAMAPLDSMEVLDLLFDGQDGILRNVDLAESWILTREEQKVLPNSDSDEFLNSILGPGDSDPSSPIWSPADSDSGISEDLPSDSQDTPPGSGPGSANVAARCHPSKQGEGPCPSYLPSTACPEPPRTQVHESSVAIDLDMWSTDTLYPEEQAGSPSRFNLTVKELLLSGGGGDLQQHPLAASQLLGPGSGHCQELVLTEDEKKLLAKEGVTLPTQLPLTKYEERVLKKIRRKIRNKQSAQESRKKKKEYIDGLENRMSACTAQNQELQRKVLHLEKQNLSLLEQLKHLQALVVQSTSKPAHAGTCIAVLLLSFVLIILPSISPFTANKVDSPGDFIPVRVFSRTLHNHAASRVAPDVTPGPEVPGPHKGSSGGLSADWGNFLEIPMLDDPTEELDNTTLVLANSTEDLGRATLLDWVASEPLLGQMGLEIPGEEIWLSWVPRWLRVRVVQDALGVL.

At 1–319 (MDGDISTGKM…TSKPAHAGTC (319 aa)) the chain is on the cytoplasmic side. Positions 59 to 145 (SDSDEFLNSI…PEPPRTQVHE (87 aa)) are disordered. Residues 239-302 (VLKKIRRKIR…LSLLEQLKHL (64 aa)) enclose the bZIP domain. Positions 241–270 (KKIRRKIRNKQSAQESRKKKKEYIDGLENR) are basic motif. The segment at 281–302 (LQRKVLHLEKQNLSLLEQLKHL) is leucine-zipper. Residue K290 forms a Glycyl lysine isopeptide (Lys-Gly) (interchain with G-Cter in ubiquitin) linkage. Residues 320-340 (IAVLLLSFVLIILPSISPFTA) form a helical; Signal-anchor for type II membrane protein membrane-spanning segment. Residues 341-470 (NKVDSPGDFI…RVVQDALGVL (130 aa)) lie on the Lumenal side of the membrane. Residues N410 and N417 are each glycosylated (N-linked (GlcNAc...) asparagine).

This sequence belongs to the bZIP family. ATF subfamily. In terms of assembly, binds DNA as a dimer. May form homodimers. Interacts with ATF6. Interacts with SYNV1/HRD1; this interaction leads to CREB3L3 ubiquitination and proteasomal degradation. Controlled by regulated intramembrane proteolysis (RIP). Following ER stress a fragment containing the cytoplasmic transcription factor domain is released by proteolysis. The cleavage seems to be performed sequentially by site-1 and site-2 proteases (PS1 and PS2). Post-translationally, N-glycosylation is required for optimal proteolytic activation. In terms of processing, ubiquitinated at Lys-290 by SYNV1/HRD1 via 'Lys-27'-linked ubiquitin.

Its subcellular location is the endoplasmic reticulum membrane. It is found in the nucleus. In terms of biological role, transcription factor that may act during endoplasmic reticulum stress by activating unfolded protein response target genes. Activated in response to cAMP stimulation. Binds the cAMP response element (CRE). Activates transcription through box-B element and CRE. Seems to function synergistically with ATF6. In acute inflammatory response, may activate expression of acute phase response (APR) genes. May be involved in growth suppression. Regulates FGF21 transcription. Plays a crucial role in the regulation of triglyceride metabolism and is required for the maintenance of normal plasma triglyceride concentrations. This chain is Cyclic AMP-responsive element-binding protein 3-like protein 3 (Creb3l3), found in Rattus norvegicus (Rat).